The sequence spans 155 residues: Probable calcium-binding protein CML44 (155 aa).

3 EF-hand domains span residues 6–41, 85–120, and 130–155; these read ITTNDLRRMFKTLDKNQDGLVTLDELLWILDKLGWA, DNDEAIARAFNVFDVNGDGYISAEELRDVLERLGFE, and RMIRVHDKNLDGFVDFEEFKNMILHV. Residues Asp-19, Asn-21, Asp-23, Glu-30, Asp-98, Asn-100, Asp-102, Tyr-104, and Glu-109 each contribute to the Ca(2+) site.

Functionally, potential calcium sensor. This is Probable calcium-binding protein CML44 (CML44) from Arabidopsis thaliana (Mouse-ear cress).